Here is a 179-residue protein sequence, read N- to C-terminus: Large ribosomal subunit protein uL5 (179 aa).

N6-acetyllysine is present on K3.

Belongs to the universal ribosomal protein uL5 family. In terms of assembly, part of the 50S ribosomal subunit; part of the 5S rRNA/L5/L18/L25 subcomplex. Contacts the 5S rRNA and the P site tRNA. Forms a bridge to the 30S subunit in the 70S ribosome.

This is one of the proteins that bind and probably mediate the attachment of the 5S RNA into the large ribosomal subunit, where it forms part of the central protuberance. In the 70S ribosome it contacts protein S13 of the 30S subunit (bridge B1b), connecting the 2 subunits; this bridge is implicated in subunit movement. Contacts the P site tRNA; the 5S rRNA and some of its associated proteins might help stabilize positioning of ribosome-bound tRNAs. This Escherichia coli O45:K1 (strain S88 / ExPEC) protein is Large ribosomal subunit protein uL5.